Consider the following 71-residue polypeptide: Conotoxin TxMMSK-05 (71 aa).

The signal sequence occupies residues 1-20 (MMSKLGALLIICLLLFPLTA). The propeptide occupies 21–52 (VPLDGDQHADRPAERLQDDISSKHHPMFDAVR). Disulfide bonds link Cys54–Cys70, Cys55–Cys66, and Cys60–Cys69.

It belongs to the conotoxin M superfamily. Expressed by the venom duct.

It is found in the secreted. The sequence is that of Conotoxin TxMMSK-05 from Conus textile (Cloth-of-gold cone).